Reading from the N-terminus, the 158-residue chain is MNQEKLAKLQAQVRIGGKGTARRKKKVVHRTATADDKKLQSSLKKLVVNNIAGIEEVNMIKDDGTVIHFNNPKVQASLSANTFAITGHAETKQLTEMLPGILSQLGADSLTSLRKLAEQFPRQVLDNKAPKAEDIDEEDDDVPDLVENFDEASKNEAN.

One can recognise an NAC-A/B domain in the interval 33–98; the sequence is TADDKKLQSS…AETKQLTEML (66 aa). The tract at residues 125–158 is disordered; that stretch reads LDNKAPKAEDIDEEDDDVPDLVENFDEASKNEAN. Residues 134-150 are compositionally biased toward acidic residues; that stretch reads DIDEEDDDVPDLVENFD.

The protein belongs to the NAC-beta family.

This Danio rerio (Zebrafish) protein is Transcription factor BTF3 homolog 4 (btf3l4).